Consider the following 813-residue polypeptide: Immunoglobulin superfamily DCC subclass member 3 (813 aa).

The segment at 1-21 (MAEPRTASPRRLPALRRPGFL) is disordered. The N-terminal stretch at 1–47 (MAEPRTASPRRLPALRRPGFLPPLLPPPPPPLLLLLLLLPLPAPSLG) is a signal peptide. Over residues 9 to 19 (PRRLPALRRPG) the composition is skewed to low complexity. Ig-like C2-type domains follow at residues 49–151 (GHSA…ATMS), 151–232 (SDFH…VRVS), 250–333 (PTIL…RTAQ), and 341–428 (PAEF…ARLT). 2 cysteine pairs are disulfide-bonded: C75/C129 and C172/C221. An N-linked (GlcNAc...) asparagine glycan is attached at N105. Residue N258 is glycosylated (N-linked (GlcNAc...) asparagine). Cystine bridges form between C271-C319 and C363-C412. N393 and N394 each carry an N-linked (GlcNAc...) asparagine glycan. Fibronectin type-III domains follow at residues 438 to 532 (PPRN…TLGE) and 535 to 630 (VPPP…ASER). 3 N-linked (GlcNAc...) asparagine glycosylation sites follow: N592, N616, and N646. A helical membrane pass occupies residues 653–673 (IVIGIHIGVTCIIFCVLFLLF). 2 disordered regions span residues 689 to 724 (LSPP…EKPV) and 775 to 813 (TTEA…AAPQ).

It belongs to the immunoglobulin superfamily. DCC family. Detected in cerebellum, kidney, heart, lung, skeletal muscle and spleen.

Its subcellular location is the membrane. This Mus musculus (Mouse) protein is Immunoglobulin superfamily DCC subclass member 3 (Igdcc3).